Consider the following 286-residue polypeptide: 33 kDa chaperonin (286 aa).

2 disulfides stabilise this stretch: Cys225-Cys227 and Cys258-Cys261.

The protein belongs to the HSP33 family. Post-translationally, under oxidizing conditions two disulfide bonds are formed involving the reactive cysteines. Under reducing conditions zinc is bound to the reactive cysteines and the protein is inactive.

Its subcellular location is the cytoplasm. Functionally, redox regulated molecular chaperone. Protects both thermally unfolding and oxidatively damaged proteins from irreversible aggregation. Plays an important role in the bacterial defense system toward oxidative stress. The protein is 33 kDa chaperonin of Shewanella baltica (strain OS223).